Here is a 548-residue protein sequence, read N- to C-terminus: BTB/POZ domain-containing protein At5g17580 (548 aa).

One can recognise a BTB domain in the interval 7 to 74; it reads SDLHINVKGV…CNGSEFKFTS (68 aa). Residues 180–442 enclose the NPH3 domain; it reads DWKSEDLITI…VNVLCVSQLQ (263 aa). Residue tyrosine 383 is modified to Phosphotyrosine. Residues 442 to 493 adopt a coiled-coil conformation; that stretch reads QIRDTVAKEIKGMEEKVDEEEEEEIEVSSDEDEMEKMSNKLLGLEIENDECV.

Belongs to the NPH3 family.

The protein operates within protein modification; protein ubiquitination. Its function is as follows. May act as a substrate-specific adapter of an E3 ubiquitin-protein ligase complex (CUL3-RBX1-BTB) which mediates the ubiquitination and subsequent proteasomal degradation of target proteins. The chain is BTB/POZ domain-containing protein At5g17580 from Arabidopsis thaliana (Mouse-ear cress).